Reading from the N-terminus, the 533-residue chain is Peptide chain release factor 3 (533 aa).

The tr-type G domain maps to 11–284 (RRRRTFAIIS…ALVGLSPEPL (274 aa)). GTP is bound by residues 20–27 (SHPDAGKT), 92–96 (DTPGH), and 146–149 (NKLD).

Belongs to the TRAFAC class translation factor GTPase superfamily. Classic translation factor GTPase family. PrfC subfamily.

Its subcellular location is the cytoplasm. In terms of biological role, increases the formation of ribosomal termination complexes and stimulates activities of RF-1 and RF-2. It binds guanine nucleotides and has strong preference for UGA stop codons. It may interact directly with the ribosome. The stimulation of RF-1 and RF-2 is significantly reduced by GTP and GDP, but not by GMP. This is Peptide chain release factor 3 from Ralstonia nicotianae (strain ATCC BAA-1114 / GMI1000) (Ralstonia solanacearum).